Consider the following 220-residue polypeptide: NADH-quinone oxidoreductase subunit I (220 aa).

4Fe-4S ferredoxin-type domains lie at 71 to 102 (LQRL…IITH) and 112 to 141 (DSYT…MGNR). [4Fe-4S] cluster-binding residues include cysteine 82, cysteine 85, cysteine 88, cysteine 92, cysteine 121, cysteine 124, cysteine 127, and cysteine 131. A disordered region spans residues 187–220 (MQATPLDYVQEPSKEESQEETPTNPESNKGDENV).

Belongs to the complex I 23 kDa subunit family. NDH-1 is composed of 14 different subunits. Subunits NuoA, H, J, K, L, M, N constitute the membrane sector of the complex. The cofactor is [4Fe-4S] cluster.

The protein resides in the cell inner membrane. The enzyme catalyses a quinone + NADH + 5 H(+)(in) = a quinol + NAD(+) + 4 H(+)(out). Its function is as follows. NDH-1 shuttles electrons from NADH, via FMN and iron-sulfur (Fe-S) centers, to quinones in the respiratory chain. The immediate electron acceptor for the enzyme in this species is believed to be ubiquinone. Couples the redox reaction to proton translocation (for every two electrons transferred, four hydrogen ions are translocated across the cytoplasmic membrane), and thus conserves the redox energy in a proton gradient. This is NADH-quinone oxidoreductase subunit I from Helicobacter pylori (strain ATCC 700392 / 26695) (Campylobacter pylori).